The primary structure comprises 436 residues: Trigger factor (436 aa).

The PPIase FKBP-type domain maps to Gly161 to Pro246.

It belongs to the FKBP-type PPIase family. Tig subfamily.

It is found in the cytoplasm. The enzyme catalyses [protein]-peptidylproline (omega=180) = [protein]-peptidylproline (omega=0). In terms of biological role, involved in protein export. Acts as a chaperone by maintaining the newly synthesized protein in an open conformation. Functions as a peptidyl-prolyl cis-trans isomerase. The sequence is that of Trigger factor from Azotobacter vinelandii (strain DJ / ATCC BAA-1303).